Consider the following 242-residue polypeptide: Zinc import ATP-binding protein ZnuC (242 aa).

Residues 24–241 (INVKDLSFAY…EKFLKMFSSY (218 aa)) enclose the ABC transporter domain. 56 to 63 (GPNGGGKT) is a binding site for ATP.

It belongs to the ABC transporter superfamily. Zinc importer (TC 3.A.1.15.5) family. As to quaternary structure, the complex is composed of two ATP-binding proteins (ZnuC), two transmembrane proteins (ZnuB) and a solute-binding protein (ZnuA).

Its subcellular location is the cell inner membrane. The enzyme catalyses Zn(2+)(out) + ATP(in) + H2O(in) = Zn(2+)(in) + ADP(in) + phosphate(in) + H(+)(in). In terms of biological role, part of the ABC transporter complex ZnuABC involved in zinc import. Responsible for energy coupling to the transport system. In Ehrlichia ruminantium (strain Gardel), this protein is Zinc import ATP-binding protein ZnuC.